The chain runs to 642 residues: Threonine--tRNA ligase (642 aa).

The TGS domain maps to 1 to 61 (MPVITLPDGS…ENDATLAIIT (61 aa)). The tract at residues 243-534 (DHRKIGKQLD…LTEEFAGFFP (292 aa)) is catalytic. 3 residues coordinate Zn(2+): cysteine 334, histidine 385, and histidine 511.

It belongs to the class-II aminoacyl-tRNA synthetase family. In terms of assembly, homodimer. Zn(2+) is required as a cofactor.

The protein localises to the cytoplasm. The enzyme catalyses tRNA(Thr) + L-threonine + ATP = L-threonyl-tRNA(Thr) + AMP + diphosphate + H(+). Its function is as follows. Catalyzes the attachment of threonine to tRNA(Thr) in a two-step reaction: L-threonine is first activated by ATP to form Thr-AMP and then transferred to the acceptor end of tRNA(Thr). Also edits incorrectly charged L-seryl-tRNA(Thr). This chain is Threonine--tRNA ligase, found in Salmonella paratyphi C (strain RKS4594).